Reading from the N-terminus, the 521-residue chain is D-aminoacyl-tRNA deacylase (521 aa).

Disordered stretches follow at residues 323–353 and 499–521; these read AVGTVHTKDSTDIDTGTNHNVDAERTESEDS and VFSTSSSSSSSSSSSSSSSSSSS. Over residues 343–353 the composition is skewed to basic and acidic residues; it reads VDAERTESEDS. Over residues 501-521 the composition is skewed to low complexity; it reads STSSSSSSSSSSSSSSSSSSS.

This sequence belongs to the DtdA deacylase family. As to quaternary structure, monomer. Zn(2+) is required as a cofactor.

It catalyses the reaction a D-aminoacyl-tRNA + H2O = a tRNA + a D-alpha-amino acid + H(+). It carries out the reaction glycyl-tRNA(Ala) + H2O = tRNA(Ala) + glycine + H(+). Its function is as follows. D-aminoacyl-tRNA deacylase with broad substrate specificity. By recycling D-aminoacyl-tRNA to D-amino acids and free tRNA molecules, this enzyme counteracts the toxicity associated with the formation of D-aminoacyl-tRNA entities in vivo. The protein is D-aminoacyl-tRNA deacylase of Haloquadratum walsbyi (strain DSM 16790 / HBSQ001).